The chain runs to 333 residues: Putative F-box protein At4g11580 (333 aa).

An F-box domain is found at 11–58; that stretch reads VSEWADLNKDILELIFNKLDVMDITMGASRVCISWFLASHNKTLWNTV.

The protein is Putative F-box protein At4g11580 of Arabidopsis thaliana (Mouse-ear cress).